A 445-amino-acid chain; its full sequence is Phosphoglucosamine mutase (445 aa).

Ser-102 serves as the catalytic Phosphoserine intermediate. Mg(2+) is bound by residues Ser-102, Asp-241, Asp-243, and Asp-245. Ser-102 carries the phosphoserine modification.

This sequence belongs to the phosphohexose mutase family. Mg(2+) serves as cofactor. Post-translationally, activated by phosphorylation.

It catalyses the reaction alpha-D-glucosamine 1-phosphate = D-glucosamine 6-phosphate. Functionally, catalyzes the conversion of glucosamine-6-phosphate to glucosamine-1-phosphate. This is Phosphoglucosamine mutase from Aliivibrio fischeri (strain MJ11) (Vibrio fischeri).